Consider the following 231-residue polypeptide: Ribonuclease 3 (231 aa).

In terms of domain architecture, RNase III spans 3-130 (MHEFFENFGI…VTAAIYLDQT (128 aa)). Residue Glu-43 participates in Mg(2+) binding. Residue Asp-47 is part of the active site. Mg(2+) is bound by residues Asp-116 and Glu-119. Glu-119 is an active-site residue. The region spanning 157-228 (DYKSELQEII…AKDCLNKLKK (72 aa)) is the DRBM domain.

This sequence belongs to the ribonuclease III family. In terms of assembly, homodimer. Mg(2+) is required as a cofactor.

The protein localises to the cytoplasm. The catalysed reaction is Endonucleolytic cleavage to 5'-phosphomonoester.. Digests double-stranded RNA. Involved in the processing of primary rRNA transcript to yield the immediate precursors to the large and small rRNAs (23S and 16S). Processes some mRNAs, and tRNAs when they are encoded in the rRNA operon. Processes pre-crRNA and tracrRNA of type II CRISPR loci if present in the organism. This chain is Ribonuclease 3, found in Mesoplasma florum (strain ATCC 33453 / NBRC 100688 / NCTC 11704 / L1) (Acholeplasma florum).